Here is a 1501-residue protein sequence, read N- to C-terminus: Multidrug resistance protein CDR1 (1501 aa).

The tract at residues 1 to 30 (MSDSKMSSQDESKLEKAISQDSSSENHSIN) is disordered. The Cytoplasmic segment spans residues 1–513 (MSDSKMSSQD…NFLRMKGDPS (513 aa)). The span at 8–18 (SQDESKLEKAI) shows a compositional bias: basic and acidic residues. Positions 150 to 404 (LATEGFRHFQ…FEKMGWKCPQ (255 aa)) constitute an ABC transporter 1 domain. A helical membrane pass occupies residues 514–534 (IPIFSVFGQLVMGLILSSVFY). A glycan (N-linked (GlcNAc...) asparagine) is linked at asparagine 535. 4 consecutive transmembrane segments (helical) span residues 549–569 (AMFFAVLFNAFSSLLEIMSLF), 598–618 (LPVKLAMSMSFNFVFYFMVNF), 623–643 (GRFFFYWLMCIWCTFVMSHLF), and 655–675 (GAMTPATVLLLAMVIYTGFVI). N-linked (GlcNAc...) asparagine glycosylation is present at asparagine 724. The chain crosses the membrane as a helical span at residues 765 to 785 (LGITIGFAVFFLAIYIALTEF). At 786–1195 (NKGAMQKGEI…TIVQDWRSPG (410 aa)) the chain is on the cytoplasmic side. One can recognise an ABC transporter 2 domain in the interval 859 to 1103 (FFWRDLTYQV…MINYFEKYGA (245 aa)). Residue 895–902 (GASGAGKT) coordinates ATP. 6 helical membrane-spanning segments follow: residues 1196-1216 (YIYSKIFLVVSAALFNGFSFF), 1230-1250 (FSVFMFFIPFNTLVQQMLPYF), 1281-1301 (IPYQVAVGTIAFFCWYYPLGL), 1315-1335 (GVLMWMLVTAFYVYTATMGQL), 1356-1376 (MCLNFCGVLAGPDVLPGFWIF), and 1467-1487 (FGIFIAFIAINIILTVIFYWL).

The protein belongs to the ABC transporter superfamily. ABCG family. PDR (TC 3.A.1.205) subfamily.

It is found in the membrane. Its function is as follows. Transporter, whose physiological function is not yet established. Confers resistance to the chemical cycloheximide. This chain is Multidrug resistance protein CDR1 (CDR1), found in Candida albicans (Yeast).